The chain runs to 227 residues: Phosphatidate cytidylyltransferase (227 aa).

A run of 6 helical transmembrane segments spans residues Phe31–Met51, Ile65–Leu85, Trp93–Gly113, Trp131–Ile151, Ile165–Ile185, and Gly206–Ile226.

This sequence belongs to the CDS family.

It localises to the cell membrane. It catalyses the reaction a 1,2-diacyl-sn-glycero-3-phosphate + CTP + H(+) = a CDP-1,2-diacyl-sn-glycerol + diphosphate. It functions in the pathway phospholipid metabolism; CDP-diacylglycerol biosynthesis; CDP-diacylglycerol from sn-glycerol 3-phosphate: step 3/3. This is Phosphatidate cytidylyltransferase (cdsA) from Rickettsia felis (strain ATCC VR-1525 / URRWXCal2) (Rickettsia azadi).